The following is a 1027-amino-acid chain: 2-oxoglutarate dehydrogenase, mitochondrial (1027 aa).

Thiamine diphosphate contacts are provided by Arg-315, Asp-413, Asn-446, Ile-448, and Gln-674. Asp-413, Asn-446, and Ile-448 together coordinate Mg(2+).

This sequence belongs to the alpha-ketoglutarate dehydrogenase family. Homodimer. Component of the 2-oxoglutarate dehydrogenase complex. Thiamine diphosphate serves as cofactor. Mg(2+) is required as a cofactor.

Its subcellular location is the mitochondrion matrix. The enzyme catalyses N(6)-[(R)-lipoyl]-L-lysyl-[protein] + 2-oxoglutarate + H(+) = N(6)-[(R)-S(8)-succinyldihydrolipoyl]-L-lysyl-[protein] + CO2. In terms of biological role, the 2-oxoglutarate dehydrogenase complex catalyzes the overall conversion of 2-oxoglutarate to succinyl-CoA and CO(2). It contains multiple copies of three enzymatic components: 2-oxoglutarate dehydrogenase (E1), dihydrolipoamide succinyltransferase (E2) and lipoamide dehydrogenase (E3). The polypeptide is 2-oxoglutarate dehydrogenase, mitochondrial (ogdh-1) (Caenorhabditis briggsae).